The following is a 253-amino-acid chain: Tryptophan synthase alpha chain (253 aa).

Catalysis depends on proton acceptor residues Glu-45 and Asp-56.

Belongs to the TrpA family. As to quaternary structure, tetramer of two alpha and two beta chains.

It carries out the reaction (1S,2R)-1-C-(indol-3-yl)glycerol 3-phosphate + L-serine = D-glyceraldehyde 3-phosphate + L-tryptophan + H2O. Its pathway is amino-acid biosynthesis; L-tryptophan biosynthesis; L-tryptophan from chorismate: step 5/5. The alpha subunit is responsible for the aldol cleavage of indoleglycerol phosphate to indole and glyceraldehyde 3-phosphate. This is Tryptophan synthase alpha chain from Flavobacterium psychrophilum (strain ATCC 49511 / DSM 21280 / CIP 103535 / JIP02/86).